Consider the following 155-residue polypeptide: Large ribosomal subunit protein eL24 (155 aa).

Residues 119–155 (VKAAKKAAAPAPAKKSAPKQKAAKVTQKAAPRVGGKR) form a disordered region. Positions 124–133 (KAAAPAPAKK) are enriched in low complexity.

The protein belongs to the eukaryotic ribosomal protein eL24 family.

In Drosophila melanogaster (Fruit fly), this protein is Large ribosomal subunit protein eL24 (RpL24).